Here is a 153-residue protein sequence, read N- to C-terminus: Penitrem biosynthesis cluster 1 protein I (153 aa).

The protein operates within secondary metabolite biosynthesis. Functionally, part of the gene cluster that mediates the biosynthesis of the indole diterpenes penitrems. The geranylgeranyl diphosphate (GGPP) synthase ptmG catalyzes the first step in penitrem biosynthesis via conversion of farnesyl pyrophosphate and isopentyl pyrophosphate into geranylgeranyl pyrophosphate (GGPP). Condensation of indole-3-glycerol phosphate with GGPP by the prenyl transferase ptmC then forms 3-geranylgeranylindole (3-GGI). Epoxidation by the FAD-dependent monooxygenase ptmM leads to a epoxidized-GGI that is substrate of the terpene cyclase ptmB for cyclization to yield paspaline. Paspaline is subsequently converted to 13-desoxypaxilline by the cytochrome P450 monooxygenase ptmP, the latter being then converted to paxilline by the cytochrome P450 monooxygenase ptmQ. Paxilline is converted to beta-paxitriol via C-10 ketoreduction by the short-chain dehydrogenase ptmH which can be monoprenylated at the C-20 by the indole diterpene prenyltransferase ptmD. A two-step elimination (acetylation and elimination) process performed by the O-acetyltransferase ptmV and ptmI leads to the production of the prenylated form of penijanthine. The FAD-linked oxidoreductase ptmO then converts the prenylated form of penijanthine into PC-M5 which is in turn transformed into PC-M4 by the aromatic dimethylallyltransferase ptmE. Five sequential oxidative transformations performed by the cytochrome P450 monooxygenases ptmK, ptmU, ptmL, ptmN and ptmJ yield the various penitrem compounds. PtmK, ptmU and ptmM are involved in the formation of the key bicyclic ring of penitrem C via the formation of the intermediates secopenitrem D and penitrem D. PtmL catalyzes the epoxidation of penitrem D and C to yield penitrem B and F, respectively. PtmJ catalyzes the last benzylic hydroxylation to convert penitrem B to prenitrem E and penitrem F to penitrem A. This Penicillium ochrochloron protein is Penitrem biosynthesis cluster 1 protein I.